A 186-amino-acid chain; its full sequence is Signal peptidase I (186 aa).

Topologically, residues M1–A19 are cytoplasmic. The chain crosses the membrane as a helical span at residues I20–V40. Residues E41–D186 lie on the Extracellular side of the membrane. Residues S44 and K86 contribute to the active site.

Belongs to the peptidase S26 family.

It localises to the cell membrane. It catalyses the reaction Cleavage of hydrophobic, N-terminal signal or leader sequences from secreted and periplasmic proteins.. This chain is Signal peptidase I (lepB), found in Bacillus licheniformis.